The following is a 199-amino-acid chain: Recombination protein RecR (199 aa).

The C4-type zinc-finger motif lies at 57-72 (CQSCRTYTEESLCPIC). Residues 81–176 (STICVVETPA…VISRIAHGVP (96 aa)) form the Toprim domain.

This sequence belongs to the RecR family.

In terms of biological role, may play a role in DNA repair. It seems to be involved in an RecBC-independent recombinational process of DNA repair. It may act with RecF and RecO. In Shewanella sp. (strain MR-4), this protein is Recombination protein RecR.